Here is a 192-residue protein sequence, read N- to C-terminus: Putative cyclic ADP-D-ribose synthase ThsB1 (192 aa).

Belongs to the Thoeris B TIR-like family. In terms of assembly, monomer; not seen to interact with ThsA.

The protein localises to the cytoplasm. Its activity is regulated as follows. Activated upon phage infection. Functionally, TIR-like domain-containing component of the Thoeris antiviral defense system, composed of ThsA and ThsB. Expression of ThsA and ThsB in B.subtilis (strain BEST7003) confers resistance to phages SBSphiC, SBSphiJ and SPO1. Phage infection activates this protein so that 30 to 45 minutes post-infection with phage SPO1 it generates a signal molecule that in turn activates the NAD(+) hydrolase activity of ThsA. The signal is similar to cyclic ADP-D-ribose, but how it differs is unknown. In vitro purified (but unactivated) ThsB has no NAD(+) hydrolyzing activity, no activity on AMP, CMP, GMP or UMP, does not alter the activity of ThsA, does not bind DNA. Hydrolyzes NAD(+) to make a cyclic ADP-D-ribose (cADPR) signaling molecule; might make 3'cADPR. The chain is Putative cyclic ADP-D-ribose synthase ThsB1 from Bacillus cereus (strain MSX-D12).